Here is a 166-residue protein sequence, read N- to C-terminus: Tetranectin-like protein (166 aa).

Disulfide bonds link cysteine 37–cysteine 47, cysteine 64–cysteine 160, and cysteine 136–cysteine 152. Residues 43–161 (IHKKCYLASR…CRSEKRYICE (119 aa)) enclose the C-type lectin domain.

The sequence is that of Tetranectin-like protein from Carcharhinus perezii (Reef shark).